Consider the following 378-residue polypeptide: Ribosomal RNA large subunit methyltransferase G (378 aa).

It belongs to the methyltransferase superfamily. RlmG family.

The protein resides in the cytoplasm. It catalyses the reaction guanosine(1835) in 23S rRNA + S-adenosyl-L-methionine = N(2)-methylguanosine(1835) in 23S rRNA + S-adenosyl-L-homocysteine + H(+). Its function is as follows. Specifically methylates the guanine in position 1835 (m2G1835) of 23S rRNA. This is Ribosomal RNA large subunit methyltransferase G from Shewanella baltica (strain OS185).